Consider the following 302-residue polypeptide: Methionyl-tRNA formyltransferase (302 aa).

(6S)-5,6,7,8-tetrahydrofolate is bound at residue 107–110 (SDLP).

The protein belongs to the Fmt family.

The enzyme catalyses L-methionyl-tRNA(fMet) + (6R)-10-formyltetrahydrofolate = N-formyl-L-methionyl-tRNA(fMet) + (6S)-5,6,7,8-tetrahydrofolate + H(+). Functionally, attaches a formyl group to the free amino group of methionyl-tRNA(fMet). The formyl group appears to play a dual role in the initiator identity of N-formylmethionyl-tRNA by promoting its recognition by IF2 and preventing the misappropriation of this tRNA by the elongation apparatus. The sequence is that of Methionyl-tRNA formyltransferase from Rickettsia massiliae (strain Mtu5).